The primary structure comprises 332 residues: UDP-N-acetylenolpyruvoylglucosamine reductase (332 aa).

The FAD-binding PCMH-type domain occupies 15–184 (IDVSAACFLE…TYVSFRLSKR (170 aa)). The active site involves R160. S232 serves as the catalytic Proton donor. Residue E328 is part of the active site.

This sequence belongs to the MurB family. Requires FAD as cofactor.

Its subcellular location is the cytoplasm. It catalyses the reaction UDP-N-acetyl-alpha-D-muramate + NADP(+) = UDP-N-acetyl-3-O-(1-carboxyvinyl)-alpha-D-glucosamine + NADPH + H(+). Its pathway is cell wall biogenesis; peptidoglycan biosynthesis. Functionally, cell wall formation. This chain is UDP-N-acetylenolpyruvoylglucosamine reductase, found in Bacteroides fragilis (strain ATCC 25285 / DSM 2151 / CCUG 4856 / JCM 11019 / LMG 10263 / NCTC 9343 / Onslow / VPI 2553 / EN-2).